A 278-amino-acid chain; its full sequence is Envelope glycoprotein L (278 aa).

Positions 1 to 30 (MCRRPDCGFSFSPGPVILLWCCLLLPIVSS) are cleaved as a signal peptide. The gL betaherpesvirus-type domain occupies 43–256 (VPAECPELTR…DKYYAGLPPE (214 aa)). Cys154 and Cys159 are disulfide-bonded.

The protein belongs to the herpesviridae glycoprotein L (gL) family. Betaherpesvirinae gL subfamily. As to quaternary structure, interacts with glycoprotein H (gH); this interaction is necessary for the correct processing and cell surface expression of gH. Forms the envelope pentamer complex (PC) composed of gH, gL, UL128, UL130, and UL131A. The pentamer interacts with host NRP2. Forms the envelope trimer complex composed of gH, gL, and gO. The trimer interacts with host PDGFRA.

It is found in the virion membrane. The protein localises to the host cell membrane. It localises to the host Golgi apparatus. Its subcellular location is the host trans-Golgi network. Functionally, the heterodimer glycoprotein H-glycoprotein L is required for the fusion of viral and plasma membranes leading to virus entry into the host cell. Acts as a functional inhibitor of gH and maintains gH in an inhibited form. Upon binding to host integrins, gL dissociates from gH leading to activation of the viral fusion glycoproteins gB and gH. In human cytomegalovirus, forms two distincts complexes to mediate viral entry, a trimer and a pentamer at the surface of the virion envelope. The gH-gL-gO trimer is required for infection in fibroblasts by interacting with host PDGFRA. The gH-gL-UL128-UL130-UL131A pentamer is essential for viral entry in epithelial, endothelial and myeloid cells via interaction with host NRP2. The protein is Envelope glycoprotein L of Human cytomegalovirus (strain PT) (HHV-5).